The following is a 680-amino-acid chain: Potassium-transporting ATPase ATP-binding subunit (680 aa).

The next 4 membrane-spanning stretches (helical) occupy residues 37-57 (VIFV…LDVA), 69-89 (IAAW…VAEG), 223-243 (ILLS…WGLA), and 257-277 (ALLV…IGIA). D307 acts as the 4-aspartylphosphate intermediate in catalysis. Residues D344, E348, 375–382 (FTAETRLS), and K393 each bind ATP. D516 and D520 together coordinate Mg(2+). 3 consecutive transmembrane segments (helical) span residues 586–606 (FAII…LNIM), 614–634 (AILS…PLAL), and 652–672 (LLVY…LIDL).

The protein belongs to the cation transport ATPase (P-type) (TC 3.A.3) family. Type IA subfamily. The system is composed of three essential subunits: KdpA, KdpB and KdpC.

It localises to the cell inner membrane. The enzyme catalyses K(+)(out) + ATP + H2O = K(+)(in) + ADP + phosphate + H(+). In terms of biological role, part of the high-affinity ATP-driven potassium transport (or Kdp) system, which catalyzes the hydrolysis of ATP coupled with the electrogenic transport of potassium into the cytoplasm. This subunit is responsible for energy coupling to the transport system and for the release of the potassium ions to the cytoplasm. The polypeptide is Potassium-transporting ATPase ATP-binding subunit (Rhizobium meliloti (strain 1021) (Ensifer meliloti)).